We begin with the raw amino-acid sequence, 617 residues long: mRNA-decapping enzyme 1B (617 aa).

A2 is subject to N-acetylalanine. At S147 the chain carries Phosphoserine. Y191 is subject to Phosphotyrosine. Disordered stretches follow at residues 195–222 (NLIK…LDPE) and 243–266 (TVEP…KLPI). Positions 205 to 219 (SENQQQRIPQPNQTL) are enriched in polar residues. Positions 252 to 261 (QQQQQQQQQQ) are enriched in low complexity. S275 and S336 each carry phosphoserine. The tract at residues 362–426 (TPGAANKCDP…VGHQAHGREQ (65 aa)) is disordered. Positions 371–381 (PSTPAPASSAA) are enriched in low complexity. A Phosphothreonine modification is found at T392. 2 positions are modified to phosphoserine: S448 and S511.

This sequence belongs to the DCP1 family. In terms of assembly, interacts with DCP1A. (Microbial infection) Interacts with rotavirus A non-structural protein 2; this interaction probably plays a role in the sequestration of DCP1B in viral factories. Interacts with rotavirus A non-structural protein 5; this interaction probably plays a role in its sequestration in viral factories.

The protein resides in the cytoplasm. It is found in the nucleus. It carries out the reaction a 5'-end (N(7)-methyl 5'-triphosphoguanosine)-ribonucleoside in mRNA + H2O = N(7)-methyl-GDP + a 5'-end phospho-ribonucleoside in mRNA + 2 H(+). Functionally, may play a role in the degradation of mRNAs, both in normal mRNA turnover and in nonsense-mediated mRNA decay. May remove the 7-methyl guanine cap structure from mRNA molecules, yielding a 5'-phosphorylated mRNA fragment and 7m-GDP. In Homo sapiens (Human), this protein is mRNA-decapping enzyme 1B (DCP1B).